A 448-amino-acid polypeptide reads, in one-letter code: Methylenetetrahydrofolate--tRNA-(uracil-5-)-methyltransferase TrmFO (448 aa).

13 to 18 lines the FAD pocket; sequence GAGLAG.

It belongs to the MnmG family. TrmFO subfamily. FAD serves as cofactor.

It is found in the cytoplasm. The catalysed reaction is uridine(54) in tRNA + (6R)-5,10-methylene-5,6,7,8-tetrahydrofolate + NADH + H(+) = 5-methyluridine(54) in tRNA + (6S)-5,6,7,8-tetrahydrofolate + NAD(+). It carries out the reaction uridine(54) in tRNA + (6R)-5,10-methylene-5,6,7,8-tetrahydrofolate + NADPH + H(+) = 5-methyluridine(54) in tRNA + (6S)-5,6,7,8-tetrahydrofolate + NADP(+). Functionally, catalyzes the folate-dependent formation of 5-methyl-uridine at position 54 (M-5-U54) in all tRNAs. This chain is Methylenetetrahydrofolate--tRNA-(uracil-5-)-methyltransferase TrmFO, found in Streptococcus pyogenes serotype M2 (strain MGAS10270).